We begin with the raw amino-acid sequence, 273 residues long: Glutamate 5-kinase (273 aa).

K15 serves as a coordination point for ATP. Residues S55, D142, and N158 each coordinate substrate. ATP-binding positions include S178–D179 and T220–K226.

Belongs to the glutamate 5-kinase family.

It is found in the cytoplasm. The catalysed reaction is L-glutamate + ATP = L-glutamyl 5-phosphate + ADP. The protein operates within amino-acid biosynthesis; L-proline biosynthesis; L-glutamate 5-semialdehyde from L-glutamate: step 1/2. Its function is as follows. Catalyzes the transfer of a phosphate group to glutamate to form L-glutamate 5-phosphate. The protein is Glutamate 5-kinase of Streptococcus pyogenes serotype M3 (strain ATCC BAA-595 / MGAS315).